Consider the following 421-residue polypeptide: Polymerase delta-interacting protein 3 (421 aa).

Ala2 bears the N-acetylalanine mark. At Ser5 the chain carries Phosphoserine. Arg33 is modified (omega-N-methylarginine). Ser44 and Ser127 each carry phosphoserine. The residue at position 140 (Thr140) is a Phosphothreonine. Residue Lys200 forms a Glycyl lysine isopeptide (Lys-Gly) (interchain with G-Cter in SUMO2) linkage. 3 positions are modified to phosphoserine: Ser204, Ser215, and Ser217. Lys223 is covalently cross-linked (Glycyl lysine isopeptide (Lys-Gly) (interchain with G-Cter in SUMO2)). Ser244 carries the post-translational modification Phosphoserine. Lys248 participates in a covalent cross-link: Glycyl lysine isopeptide (Lys-Gly) (interchain with G-Cter in SUMO2). Ser275 carries the post-translational modification Phosphoserine. Residues 280–351 (TKMTVNNLHP…QPMKCNLHMN (72 aa)) form the RRM domain. The segment covering 370–379 (SMKKESELPR) has biased composition (basic and acidic residues). Residues 370-393 (SMKKESELPRRVNSASSSNPPAEV) form a disordered region. A Glycyl lysine isopeptide (Lys-Gly) (interchain with G-Cter in SUMO2) cross-link involves residue Lys372. Ser383 and Ser385 each carry phosphoserine; by RPS6KB1. Lys418 is covalently cross-linked (Glycyl lysine isopeptide (Lys-Gly) (interchain with G-Cter in SUMO2)).

Interacts with POLD2. Interacts with NCBP1 and EIF4A3. Associates with the multiprotein exon junction complex (EJC). Interacts with RPS6KB1 (activated). Interacts with ERH. Interacts with THOC2, DDX39B and ZC3H11A; the interactions are ATP-dependent and indicative for an association with the TREX complex. Phosphorylated at Ser-383 and Ser-385 by RPS6KB1.

The protein localises to the nucleus. It localises to the nucleus speckle. The protein resides in the cytoplasm. In terms of biological role, is involved in regulation of translation. Is preferentially associated with CBC-bound spliced mRNA-protein complexes during the pioneer round of mRNA translation. Contributes to enhanced translational efficiency of spliced over nonspliced mRNAs. Recruits activated ribosomal protein S6 kinase beta-1 I/RPS6KB1 to newly synthesized mRNA. Involved in nuclear mRNA export; probably mediated by association with the TREX complex. This is Polymerase delta-interacting protein 3 (POLDIP3) from Homo sapiens (Human).